Reading from the N-terminus, the 536-residue chain is CTP synthase (536 aa).

An amidoligase domain region spans residues 1–267; the sequence is MSKFVFVTGG…CKQTLNCLEL (267 aa). Serine 13 is a binding site for CTP. Position 13 (serine 13) interacts with UTP. ATP contacts are provided by residues 14–19 and aspartate 71; that span reads SIGKGI. 2 residues coordinate Mg(2+): aspartate 71 and glutamate 141. CTP contacts are provided by residues 148-150, 188-193, and lysine 224; these read DIE and KTKPTQ. UTP is bound by residues 188–193 and lysine 224; that span reads KTKPTQ. Residues 292-534 form the Glutamine amidotransferase type-1 domain; that stretch reads KVALVGKYIE…IKASQEKLEQ (243 aa). An L-glutamine-binding site is contributed by glycine 354. The Nucleophile; for glutamine hydrolysis role is filled by cysteine 381. Residues 382-385, glutamate 405, and arginine 462 each bind L-glutamine; that span reads LGMQ. Catalysis depends on residues histidine 507 and glutamate 509.

Belongs to the CTP synthase family. In terms of assembly, homotetramer.

It carries out the reaction UTP + L-glutamine + ATP + H2O = CTP + L-glutamate + ADP + phosphate + 2 H(+). The catalysed reaction is L-glutamine + H2O = L-glutamate + NH4(+). It catalyses the reaction UTP + NH4(+) + ATP = CTP + ADP + phosphate + 2 H(+). Its pathway is pyrimidine metabolism; CTP biosynthesis via de novo pathway; CTP from UDP: step 2/2. With respect to regulation, allosterically activated by GTP, when glutamine is the substrate; GTP has no effect on the reaction when ammonia is the substrate. The allosteric effector GTP functions by stabilizing the protein conformation that binds the tetrahedral intermediate(s) formed during glutamine hydrolysis. Inhibited by the product CTP, via allosteric rather than competitive inhibition. Catalyzes the ATP-dependent amination of UTP to CTP with either L-glutamine or ammonia as the source of nitrogen. Regulates intracellular CTP levels through interactions with the four ribonucleotide triphosphates. The polypeptide is CTP synthase (Prochlorococcus marinus subsp. pastoris (strain CCMP1986 / NIES-2087 / MED4)).